The chain runs to 618 residues: DNA mismatch repair protein MutL (618 aa).

Over residues 367–381 (EPTAAREPATPRYSG) the composition is skewed to low complexity. Positions 367 to 402 (EPTAAREPATPRYSGGASGGNGGRQSAGGWPHAQPG) are disordered. Residues 382–392 (GASGGNGGRQS) are compositionally biased toward gly residues.

The protein belongs to the DNA mismatch repair MutL/HexB family.

In terms of biological role, this protein is involved in the repair of mismatches in DNA. It is required for dam-dependent methyl-directed DNA mismatch repair. May act as a 'molecular matchmaker', a protein that promotes the formation of a stable complex between two or more DNA-binding proteins in an ATP-dependent manner without itself being part of a final effector complex. The chain is DNA mismatch repair protein MutL from Salmonella heidelberg (strain SL476).